Reading from the N-terminus, the 585-residue chain is Arginine--tRNA ligase (585 aa).

The short motif at 131–141 (ANPTGPMHVGH) is the 'HIGH' region element.

It belongs to the class-I aminoacyl-tRNA synthetase family. Monomer.

The protein localises to the cytoplasm. The catalysed reaction is tRNA(Arg) + L-arginine + ATP = L-arginyl-tRNA(Arg) + AMP + diphosphate. This is Arginine--tRNA ligase from Brucella anthropi (strain ATCC 49188 / DSM 6882 / CCUG 24695 / JCM 21032 / LMG 3331 / NBRC 15819 / NCTC 12168 / Alc 37) (Ochrobactrum anthropi).